Reading from the N-terminus, the 237-residue chain is 2-C-methyl-D-erythritol 4-phosphate cytidylyltransferase (237 aa).

This sequence belongs to the IspD/TarI cytidylyltransferase family. IspD subfamily.

It carries out the reaction 2-C-methyl-D-erythritol 4-phosphate + CTP + H(+) = 4-CDP-2-C-methyl-D-erythritol + diphosphate. It functions in the pathway isoprenoid biosynthesis; isopentenyl diphosphate biosynthesis via DXP pathway; isopentenyl diphosphate from 1-deoxy-D-xylulose 5-phosphate: step 2/6. Catalyzes the formation of 4-diphosphocytidyl-2-C-methyl-D-erythritol from CTP and 2-C-methyl-D-erythritol 4-phosphate (MEP). This is 2-C-methyl-D-erythritol 4-phosphate cytidylyltransferase from Acaryochloris marina (strain MBIC 11017).